Consider the following 823-residue polypeptide: Nuclear pore complex protein Nup93-1 (823 aa).

Belongs to the nucleoporin interacting component (NIC) family. In terms of assembly, part of the nuclear pore complex (NPC). Interacts with msk (via C-terminus); this association might be facilitated by Nup75. Interacts with Mad (preferentially when phosphorylated). Interacts with Nup154 (via N-terminus). Interacts with the Polycomb group (PcG) proteins Pc and E(z).

The protein resides in the nucleus membrane. It localises to the nucleus. Its subcellular location is the nuclear pore complex. The protein localises to the nucleoplasm. Required for nuclear pore complex assembly, maintenance and function. Required for nuclear import of phosphorylated Mad via importin msk. Has no role in classical nuclear localization signal (cNLS)-dependent nuclear import via importin-beta. Mediates the association between the nuclear pore complex and a subclass of silenced regions bound by Polycomb group (PcG) proteins, enables long-range interactions between Polycomb loci and contributes to repression of polycomb targets. Together with Nup62 and Nup154, contributes to karyosome morphology and chromatin organization including attachment to the nuclear envelope in oocytes and nurse cells. The polypeptide is Nuclear pore complex protein Nup93-1 (Drosophila melanogaster (Fruit fly)).